We begin with the raw amino-acid sequence, 517 residues long: MKIVSWNINGIRATRVGLKETLDSLDADIICLQETKVTRDLLDEPSAIVEGYNSYFSFSRVRSGYSGVATFCKSSTTPQAAEEGLSGVFCNRTGSVGCYGNTEQFLEEELQSLDQEGRAVLTQHRILNCEDKEETLTVINVYCPRADPEKPERKTYKLRFYHLLQTRAEAILQNGGHVIILGDVNTSHRPLDHCDPTDLETFEENPGRQWLNQFLGDPIPSQKGDSETVMPPSAGSGLFYDSFRYFHPTQKNAFTCWCSASGARQTNYGTRIDYILGNRELVESEFLDSVIMPEVEGSDHCPVKAFMKCQPIAANKCPPLCTKYLPEFAGRQQKLLQFLVKKENTLGNTTEESSELTGTPSFTEGADISTVRKRPSDKLNSTSKKKSKIVTKNGQGNLLSFFKPERQKLTMATECNPIEVPICKKEKTVQKDLQPATPAVKYNKPQTAFWKSLLKGPPPPPNCKGHSEPCVLRTVKKAGPNCGRQFYVCARPEGHSSNPQARCNFFLWLTKKAGCED.

Mg(2+)-binding residues include Asn-9 and Glu-34. Positions 82-90 (EEGLSGVFC) match the Claspin-like CKB motif motif. The active site involves Tyr-142. The Mg(2+) site is built by Asp-183, Asn-185, Asp-299, and His-300. Residue Asp-183 is the Proton donor/acceptor of the active site. Residue His-300 is the Proton acceptor of the active site. A compositionally biased stretch (polar residues) spans 347 to 362 (GNTTEESSELTGTPSF). Residues 347–366 (GNTTEESSELTGTPSFTEGA) are disordered. The PCNA interacting protein (PIP) box motif lies at 395–402 (QGNLLSFF). The Zn(2+) site is built by Cys-463, His-466, Cys-489, and Cys-503. A GRF-type zinc finger spans residues 463-512 (CKGHSEPCVLRTVKKAGPNCGRQFYVCARPEGHSSNPQARCNFFLWLTKK).

Belongs to the DNA repair enzymes AP/ExoA family. Interacts (via PIP box and GRF-type Zinc finger domain) with pcna; the interaction is required for 3 -5 SSB end resection, assembly of a checkpoint protein complex to SSB sites, and SSB signaling. Interacts with chek1. Requires Mg(2+) as cofactor. Mn(2+) is required as a cofactor. As to expression, expressed in eggs (at protein level).

Its subcellular location is the nucleus. The protein localises to the chromosome. It is found in the cytoplasm. The protein resides in the mitochondrion. The enzyme catalyses Exonucleolytic cleavage in the 3'- to 5'-direction to yield nucleoside 5'-phosphates.. 3'-5' nuclease activity is stimulated in presence of pcna. Its function is as follows. Functions as a weak apurinic/apyrimidinic (AP) endodeoxyribonuclease in the DNA base excision repair (BER) pathway of DNA lesions induced by oxidative and alkylating agents. Initiates repair of AP sites in DNA by catalyzing hydrolytic incision of the phosphodiester backbone immediately adjacent to the damage, generating a single-strand break with 5'-deoxyribose phosphate and 3'-hydroxyl ends. Exhibits 3'-5' exonuclease activity on a 3' DNA substrate; nuclease activity is stimulated by interaction with pcna. Has a preference for the 3' recessed ends over blunt-ended substrates, in both the presence and the absence of pcna. Generates single-stranded DNA (ssDNA) via 3'-5' single-strand break (SSB) end resection, thereby promoting a DNA damage response via replication protein A (rpa2)-binding to ssDNA and the recruitment of a checkpoint protein complex, including atr, atr-interacting protein atrip, and rad9, to damage sites following oxidative stress. Plays a role in reversing blocked 3' DNA ends, problematic lesions that preclude DNA synthesis. Required for chek1 phosphorylation induced by hydrogen peroxide but not by stalled replication forks. In Xenopus laevis (African clawed frog), this protein is DNA-(apurinic or apyrimidinic site) endonuclease 2.